A 301-amino-acid chain; its full sequence is UDP-N-acetylenolpyruvoylglucosamine reductase (301 aa).

The region spanning 27 to 194 is the FAD-binding PCMH-type domain; the sequence is RVGGPADVVF…LDAIFEGTPD (168 aa). Arg-172 is an active-site residue. The active-site Proton donor is Ser-223. The active site involves Glu-293.

Belongs to the MurB family. It depends on FAD as a cofactor.

It is found in the cytoplasm. It catalyses the reaction UDP-N-acetyl-alpha-D-muramate + NADP(+) = UDP-N-acetyl-3-O-(1-carboxyvinyl)-alpha-D-glucosamine + NADPH + H(+). The protein operates within cell wall biogenesis; peptidoglycan biosynthesis. Cell wall formation. This chain is UDP-N-acetylenolpyruvoylglucosamine reductase, found in Caulobacter vibrioides (strain NA1000 / CB15N) (Caulobacter crescentus).